An 89-amino-acid chain; its full sequence is Small ribosomal subunit protein uS15 (89 aa).

The protein belongs to the universal ribosomal protein uS15 family. In terms of assembly, part of the 30S ribosomal subunit. Forms a bridge to the 50S subunit in the 70S ribosome, contacting the 23S rRNA.

Its function is as follows. One of the primary rRNA binding proteins, it binds directly to 16S rRNA where it helps nucleate assembly of the platform of the 30S subunit by binding and bridging several RNA helices of the 16S rRNA. Functionally, forms an intersubunit bridge (bridge B4) with the 23S rRNA of the 50S subunit in the ribosome. The polypeptide is Small ribosomal subunit protein uS15 (Chlorobaculum parvum (strain DSM 263 / NCIMB 8327) (Chlorobium vibrioforme subsp. thiosulfatophilum)).